The sequence spans 228 residues: 2-C-methyl-D-erythritol 4-phosphate cytidylyltransferase (228 aa).

It belongs to the IspD/TarI cytidylyltransferase family. IspD subfamily.

It carries out the reaction 2-C-methyl-D-erythritol 4-phosphate + CTP + H(+) = 4-CDP-2-C-methyl-D-erythritol + diphosphate. The protein operates within isoprenoid biosynthesis; isopentenyl diphosphate biosynthesis via DXP pathway; isopentenyl diphosphate from 1-deoxy-D-xylulose 5-phosphate: step 2/6. In terms of biological role, catalyzes the formation of 4-diphosphocytidyl-2-C-methyl-D-erythritol from CTP and 2-C-methyl-D-erythritol 4-phosphate (MEP). The chain is 2-C-methyl-D-erythritol 4-phosphate cytidylyltransferase from Dechloromonas aromatica (strain RCB).